Consider the following 128-residue polypeptide: Fluoride-specific ion channel FluC (128 aa).

The next 4 helical transmembrane spans lie at 3–23 (FTTIFYIGFGGALGAILRSFT), 34–54 (LSFPLGTLSVNIIGGFFIGFL), 65–85 (INLKSFLVTGFLGGLTTFSTF), and 102–122 (FLNIASNLLLSLLFCYFGFWI). Na(+)-binding residues include Gly77 and Thr80.

Belongs to the fluoride channel Fluc/FEX (TC 1.A.43) family.

It localises to the cell inner membrane. It catalyses the reaction fluoride(in) = fluoride(out). Na(+) is not transported, but it plays an essential structural role and its presence is essential for fluoride channel function. Its function is as follows. Fluoride-specific ion channel. Important for reducing fluoride concentration in the cell, thus reducing its toxicity. The protein is Fluoride-specific ion channel FluC of Campylobacter fetus subsp. fetus (strain 82-40).